The primary structure comprises 436 residues: 3-ketoacyl-CoA thiolase (436 aa).

Cys99 functions as the Acyl-thioester intermediate in the catalytic mechanism. Catalysis depends on proton acceptor residues His392 and Cys422.

It belongs to the thiolase-like superfamily. Thiolase family. Heterotetramer of two alpha chains (FadJ) and two beta chains (FadI).

The protein resides in the cytoplasm. It catalyses the reaction an acyl-CoA + acetyl-CoA = a 3-oxoacyl-CoA + CoA. The protein operates within lipid metabolism; fatty acid beta-oxidation. Its function is as follows. Catalyzes the final step of fatty acid oxidation in which acetyl-CoA is released and the CoA ester of a fatty acid two carbons shorter is formed. In Shewanella sp. (strain W3-18-1), this protein is 3-ketoacyl-CoA thiolase.